Consider the following 276-residue polypeptide: Formamidopyrimidine-DNA glycosylase (276 aa).

Proline 2 acts as the Schiff-base intermediate with DNA in catalysis. Residue glutamate 3 is the Proton donor of the active site. Lysine 58 (proton donor; for beta-elimination activity) is an active-site residue. Histidine 94, arginine 112, and arginine 157 together coordinate DNA. The FPG-type zinc-finger motif lies at 242-276 (FVYDRAGLPCRVCGTPIKQIVQGQRSTYFCPTCQR). Arginine 266 functions as the Proton donor; for delta-elimination activity in the catalytic mechanism.

This sequence belongs to the FPG family. As to quaternary structure, monomer. Zn(2+) is required as a cofactor.

The catalysed reaction is Hydrolysis of DNA containing ring-opened 7-methylguanine residues, releasing 2,6-diamino-4-hydroxy-5-(N-methyl)formamidopyrimidine.. The enzyme catalyses 2'-deoxyribonucleotide-(2'-deoxyribose 5'-phosphate)-2'-deoxyribonucleotide-DNA = a 3'-end 2'-deoxyribonucleotide-(2,3-dehydro-2,3-deoxyribose 5'-phosphate)-DNA + a 5'-end 5'-phospho-2'-deoxyribonucleoside-DNA + H(+). Its function is as follows. Involved in base excision repair of DNA damaged by oxidation or by mutagenic agents. Acts as a DNA glycosylase that recognizes and removes damaged bases. Has a preference for oxidized purines, such as 7,8-dihydro-8-oxoguanine (8-oxoG). Has AP (apurinic/apyrimidinic) lyase activity and introduces nicks in the DNA strand. Cleaves the DNA backbone by beta-delta elimination to generate a single-strand break at the site of the removed base with both 3'- and 5'-phosphates. The sequence is that of Formamidopyrimidine-DNA glycosylase from Paraburkholderia phytofirmans (strain DSM 17436 / LMG 22146 / PsJN) (Burkholderia phytofirmans).